The chain runs to 214 residues: MAQSKFLREYKLVVVGGGGVGKSCLTIQLIQSHFVDEYDPTIEDSYRKQCVIDDEVALLDVLDTAGQEEYSAMREQYMRTGEGFLLVYSITSRQSFEEITTFQQQILRVKDKDYFPMVVVGNKCDLEGEREVTRQEGEALARSFNCKFIETSAKSRINVDKAFYDIVREIRRYNREMQGYSTGSGGSNAGGPSNKMEVNDSDAEAGCCSKCVLM.

Residues 19–24, 35–41, 65–66, 122–125, and 152–154 each bind GTP; these read GVGKSC, VDEYDPT, AG, NKCD, and SAK. The Effector region motif lies at 38-46; that stretch reads YDPTIEDSY. A disordered region spans residues 178 to 197; sequence QGYSTGSGGSNAGGPSNKME. Cys211 is subject to Cysteine methyl ester. The S-farnesyl cysteine moiety is linked to residue Cys211. The propeptide at 212-214 is removed in mature form; that stretch reads VLM.

Belongs to the small GTPase superfamily. Ras family. Interacts with farnesyltransferase beta subunit RAM1.

It is found in the cell membrane. With respect to regulation, alternates between an inactive form bound to GDP and an active form bound to GTP. Activated by a guanine nucleotide-exchange factor (GEF) and inactivated by a GTPase-activating protein (GAP). Functionally, modulates the activity of the adenylate cyclase catalytic subunit and therefore affects the biosynthesis of cyclic-AMP. Plays a role in both surface attachment and surface recognition of appressoria, a highly specialized infection structure for plant penetration. Regulates appressorium formation by coordinated regulation of cAMP signaling and Pmk1 MAPK pathways. In Pyricularia oryzae (strain 70-15 / ATCC MYA-4617 / FGSC 8958) (Rice blast fungus), this protein is Ras-like protein 2.